We begin with the raw amino-acid sequence, 294 residues long: Glycine--tRNA ligase alpha subunit (294 aa).

The protein belongs to the class-II aminoacyl-tRNA synthetase family. In terms of assembly, tetramer of two alpha and two beta subunits.

Its subcellular location is the cytoplasm. The enzyme catalyses tRNA(Gly) + glycine + ATP = glycyl-tRNA(Gly) + AMP + diphosphate. The polypeptide is Glycine--tRNA ligase alpha subunit (Natranaerobius thermophilus (strain ATCC BAA-1301 / DSM 18059 / JW/NM-WN-LF)).